Here is an 851-residue protein sequence, read N- to C-terminus: mRNA-capping enzyme catalytic subunit (851 aa).

The triphosphatase-guanylyltransferase stretch occupies residues 1–544 (MDKYISKTPL…EEEKLADIAA (544 aa)). 4 residues coordinate Mg(2+): glutamate 38, glutamate 40, glutamate 199, and glutamate 201. The active-site N6-GMP-lysine intermediate is lysine 266. An S-adenosyl-L-methionine-binding site is contributed by 554–555 (LN). The region spanning 565-850 (RVRGALGILS…HYMVYVFSKE (286 aa)) is the mRNA cap 0 methyltransferase domain. 574-575 (SN) contributes to the mRNA binding site. Residues lysine 578, aspartate 603, aspartate 625, and 683–685 (QFA) contribute to the S-adenosyl-L-methionine site.

The protein in the N-terminal section; belongs to the dsDNA virus mRNA guanylyltransferase family. This sequence in the C-terminal section; belongs to the class I-like SAM-binding methyltransferase superfamily. mRNA cap 0 methyltransferase family. As to quaternary structure, heterodimer of a catalytic and a regulatory subunit. Intrinsic methyltransferase activity of the catalytic subunit is weak and needs to be stimulated 30- to 50-fold by the regulatory subunit, which is itself catalytically inert. Mg(2+) is required as a cofactor.

The protein localises to the virion. It carries out the reaction a 5'-end triphospho-ribonucleoside in mRNA + H2O = a 5'-end diphospho-ribonucleoside in mRNA + phosphate + H(+). It catalyses the reaction a 5'-end diphospho-ribonucleoside in mRNA + GTP + H(+) = a 5'-end (5'-triphosphoguanosine)-ribonucleoside in mRNA + diphosphate. The enzyme catalyses a 5'-end (5'-triphosphoguanosine)-ribonucleoside in mRNA + S-adenosyl-L-methionine = a 5'-end (N(7)-methyl 5'-triphosphoguanosine)-ribonucleoside in mRNA + S-adenosyl-L-homocysteine. Functionally, catalytic subunit of the mRNA capping enzyme which catalyzes three enzymatic reactions: the 5' triphosphate end of the pre-mRNA is hydrolyzed to a diphosphate by RNA 5' triphosphatase; the diphosphate RNA end is capped with GMP by RNA guanylyltransferase and the GpppN cap is methylated by RNA (guanine-N7) methyltransferase. Heterodimeric mRNA capping enzyme catalyzes the linkage of a N7-methyl-guanosine moiety to the first transcribed nucleotide (cap 0 structure), whereas the polymerase associated VP39 is responsible for a second methylation at the 2'-O position of the ribose (cap 1 structure). In terms of biological role, the heterodimeric enzyme is also involved in early viral gene transcription termination and intermediate viral gene transcription initiation. Early gene transcription termination requires the termination factor VTF, the DNA-dependent ATPase NPH-I and the Rap94 subunit of the viral RNA polymerase, as well as the presence of a specific termination motif. Binds, together with RAP94, to the termination motif 5'-UUUUUNU-3' in the nascent early mRNA. The chain is mRNA-capping enzyme catalytic subunit from Fowlpox virus (strain NVSL) (FPV).